The primary structure comprises 444 residues: Trigger factor (444 aa).

Residues 165–250 enclose the PPIase FKBP-type domain; sequence GDFAKFDFEG…LHEIQELKIP (86 aa).

The protein belongs to the FKBP-type PPIase family. Tig subfamily.

Its subcellular location is the cytoplasm. The catalysed reaction is [protein]-peptidylproline (omega=180) = [protein]-peptidylproline (omega=0). Its function is as follows. Involved in protein export. Acts as a chaperone by maintaining the newly synthesized protein in an open conformation. Functions as a peptidyl-prolyl cis-trans isomerase. This chain is Trigger factor, found in Campylobacter jejuni subsp. jejuni serotype O:6 (strain 81116 / NCTC 11828).